Consider the following 291-residue polypeptide: Bis(5'-nucleosyl)-tetraphosphatase, symmetrical (291 aa).

This sequence belongs to the Ap4A hydrolase family.

The catalysed reaction is P(1),P(4)-bis(5'-adenosyl) tetraphosphate + H2O = 2 ADP + 2 H(+). Its function is as follows. Hydrolyzes diadenosine 5',5'''-P1,P4-tetraphosphate to yield ADP. The polypeptide is Bis(5'-nucleosyl)-tetraphosphatase, symmetrical (Coxiella burnetii (strain CbuK_Q154) (Coxiella burnetii (strain Q154))).